The primary structure comprises 447 residues: Phosphoglucosamine mutase (447 aa).

Residue serine 102 is the Phosphoserine intermediate of the active site. The Mg(2+) site is built by serine 102, aspartate 241, aspartate 243, and aspartate 245. Phosphoserine is present on serine 102.

This sequence belongs to the phosphohexose mutase family. Mg(2+) is required as a cofactor. Activated by phosphorylation.

It catalyses the reaction alpha-D-glucosamine 1-phosphate = D-glucosamine 6-phosphate. Its function is as follows. Catalyzes the conversion of glucosamine-6-phosphate to glucosamine-1-phosphate. This chain is Phosphoglucosamine mutase, found in Delftia acidovorans (strain DSM 14801 / SPH-1).